The primary structure comprises 187 residues: MYTQNTMKKNWYVTVGAAAALAATVGMGTAMAGTLDSTWKEATLPQVKAMLEKDTGKVSGDTVTYSGKTVHVVAAAVLPGFPFPSFEVHDKKNPTLEIPAGATVDVTFINTNKGFGHSFDITKKGPPYAVMPVIDPIVAGTGFSPVPKDGKFGYTDFTWHPTAGTYYYVCQIPGHAATGMFGKIIVK.

The signal sequence occupies residues Met1–Ala32. Positions Ser85–Lys187 constitute a Plastocyanin-like domain. The Cu cation site is built by His117, Cys170, His175, and Met180.

As to quaternary structure, monomer. It depends on Cu cation as a cofactor.

The protein resides in the periplasm. In terms of biological role, electron carrier from cytochrome c552 to the A-type oxidase. The polypeptide is Rusticyanin (rus) (Acidithiobacillus ferridurans).